Consider the following 153-residue polypeptide: D-aminoacyl-tRNA deacylase (153 aa).

The Gly-cisPro motif, important for rejection of L-amino acids signature appears at 137–138 (GP).

This sequence belongs to the DTD family. Homodimer.

It is found in the cytoplasm. The enzyme catalyses glycyl-tRNA(Ala) + H2O = tRNA(Ala) + glycine + H(+). It catalyses the reaction a D-aminoacyl-tRNA + H2O = a tRNA + a D-alpha-amino acid + H(+). Functionally, an aminoacyl-tRNA editing enzyme that deacylates mischarged D-aminoacyl-tRNAs. Also deacylates mischarged glycyl-tRNA(Ala), protecting cells against glycine mischarging by AlaRS. Acts via tRNA-based rather than protein-based catalysis; rejects L-amino acids rather than detecting D-amino acids in the active site. By recycling D-aminoacyl-tRNA to D-amino acids and free tRNA molecules, this enzyme counteracts the toxicity associated with the formation of D-aminoacyl-tRNA entities in vivo and helps enforce protein L-homochirality. The polypeptide is D-aminoacyl-tRNA deacylase (Dehalococcoides mccartyi (strain ATCC BAA-2100 / JCM 16839 / KCTC 5957 / BAV1)).